Reading from the N-terminus, the 224-residue chain is MPWSPLAALSWALVLRLLALLWPPGRGEACSCAPAHPQQHFCHSALVIRAKISSEKVVPASKDPADTQKLIRYEIKQIKMFKGFEKAKDIQYVYTPFDSSLCGVKLETNSHKQYLLTGQILSDGKVFIHLCNYIEPWEDLSLVQRESLNHHYHQNCGCQITTCYAVPCTISAPNECLWTDWLLERKLYGYQAQHYVCMKHVDGICSWYRGHLHLRKEYVDIIQP.

A signal peptide spans 1–29 (MPWSPLAALSWALVLRLLALLWPPGRGEA). Cys-30 provides a ligand contact to Zn(2+). 2 involved in metalloproteinase-binding regions span residues 30–33 (CSCA) and 99–100 (SS). 6 disulfides stabilise this stretch: Cys-30-Cys-102, Cys-32-Cys-131, Cys-42-Cys-156, Cys-158-Cys-205, Cys-163-Cys-168, and Cys-176-Cys-197. In terms of domain architecture, NTR spans 30-156 (CSCAPAHPQQ…SLNHHYHQNC (127 aa)).

Belongs to the protease inhibitor I35 (TIMP) family. As to expression, expressed in brain, heart, ovary and skeletal muscle.

The protein resides in the secreted. Its function is as follows. Complexes with metalloproteinases (such as collagenases) and irreversibly inactivates them by binding to their catalytic zinc cofactor. In Mus musculus (Mouse), this protein is Metalloproteinase inhibitor 4 (Timp4).